A 343-amino-acid polypeptide reads, in one-letter code: Anthranilate phosphoribosyltransferase (343 aa).

5-phospho-alpha-D-ribose 1-diphosphate is bound by residues Gly-86, 89 to 90 (GD), Thr-94, 96 to 99 (NIST), 114 to 122 (KHGNRSASG), and Ser-126. Gly-86 contributes to the anthranilate binding site. Position 98 (Ser-98) interacts with Mg(2+). Asn-117 is a binding site for anthranilate. Arg-172 contacts anthranilate. Positions 231 and 232 each coordinate Mg(2+).

The protein belongs to the anthranilate phosphoribosyltransferase family. In terms of assembly, homodimer. Requires Mg(2+) as cofactor.

It catalyses the reaction N-(5-phospho-beta-D-ribosyl)anthranilate + diphosphate = 5-phospho-alpha-D-ribose 1-diphosphate + anthranilate. It functions in the pathway amino-acid biosynthesis; L-tryptophan biosynthesis; L-tryptophan from chorismate: step 2/5. Catalyzes the transfer of the phosphoribosyl group of 5-phosphorylribose-1-pyrophosphate (PRPP) to anthranilate to yield N-(5'-phosphoribosyl)-anthranilate (PRA). This chain is Anthranilate phosphoribosyltransferase, found in Synechococcus sp. (strain JA-2-3B'a(2-13)) (Cyanobacteria bacterium Yellowstone B-Prime).